An 87-amino-acid polypeptide reads, in one-letter code: UPF0250 protein BUsg_472 (87 aa).

Belongs to the UPF0250 family.

This chain is UPF0250 protein BUsg_472, found in Buchnera aphidicola subsp. Schizaphis graminum (strain Sg).